The primary structure comprises 177 residues: PLAC8-like protein 1 (177 aa).

This sequence belongs to the cornifelin family.

This Mus musculus (Mouse) protein is PLAC8-like protein 1 (Plac8l1).